The sequence spans 317 residues: Ribosomal RNA small subunit methyltransferase H (317 aa).

S-adenosyl-L-methionine-binding positions include 37-39, Asp56, Phe85, Asp106, and Gln113; that span reads AGH.

This sequence belongs to the methyltransferase superfamily. RsmH family.

The protein localises to the cytoplasm. It catalyses the reaction cytidine(1402) in 16S rRNA + S-adenosyl-L-methionine = N(4)-methylcytidine(1402) in 16S rRNA + S-adenosyl-L-homocysteine + H(+). Specifically methylates the N4 position of cytidine in position 1402 (C1402) of 16S rRNA. The polypeptide is Ribosomal RNA small subunit methyltransferase H (Lactococcus lactis subsp. cremoris (strain SK11)).